Here is a 143-residue protein sequence, read N- to C-terminus: Large ribosomal subunit protein uL15 (143 aa).

The segment at 1 to 51 is disordered; that stretch reads MRLNSIAPAPGSRPSAKRVGRGIGSGLGKTAGRGHKGQKARAGGYHKVGFE. Positions 21-31 are enriched in gly residues; that stretch reads RGIGSGLGKTA.

Belongs to the universal ribosomal protein uL15 family. As to quaternary structure, part of the 50S ribosomal subunit.

Functionally, binds to the 23S rRNA. The protein is Large ribosomal subunit protein uL15 of Thioalkalivibrio sulfidiphilus (strain HL-EbGR7).